A 214-amino-acid polypeptide reads, in one-letter code: Charged multivesicular body protein 2b (214 aa).

A coiled-coil region spans residues 25–55 (QRQIARDRTALEKQEKQLEMEIKKMAKTGNR). Positions 178–199 (MAHAPSAARKTPSAATAKADGI) are disordered. Residues 202–212 (EDIERQLKALG) carry the MIT-interacting motif motif.

The protein belongs to the SNF7 family. As to quaternary structure, probable core component of the endosomal sorting required for transport complex III (ESCRT-III). ESCRT-III components are thought to multimerize to form a flat lattice on the perimeter membrane of the endosome.

The protein resides in the cytoplasm. The protein localises to the cytosol. Its subcellular location is the late endosome membrane. Probable core component of the endosomal sorting required for transport complex III (ESCRT-III) which is involved in multivesicular bodies (MVBs) formation and sorting of endosomal cargo proteins into MVBs. MVBs contain intraluminal vesicles (ILVs) that are generated by invagination and scission from the limiting membrane of the endosome and mostly are delivered to lysosomes enabling degradation of membrane proteins, such as stimulated growth factor receptors, lysosomal enzymes and lipids. The chain is Charged multivesicular body protein 2b (chmp2b) from Danio rerio (Zebrafish).